The following is a 967-amino-acid chain: Isoleucine--tRNA ligase 2 (967 aa).

The 'HIGH' region motif lies at 58 to 68 (PYANGDIHIGH). The segment at 430–463 (EADPGRADVTEEAGATGEARKVGKAEEAEEAGPV) is disordered. E598 is a binding site for L-isoleucyl-5'-AMP. The 'KMSKS' region signature appears at 639 to 643 (KMSKS). K642 contributes to the ATP binding site. Zn(2+)-binding residues include C922, C925, C942, and C945.

This sequence belongs to the class-I aminoacyl-tRNA synthetase family. IleS type 1 subfamily. In terms of assembly, monomer. Zn(2+) serves as cofactor.

The protein localises to the cytoplasm. The catalysed reaction is tRNA(Ile) + L-isoleucine + ATP = L-isoleucyl-tRNA(Ile) + AMP + diphosphate. Its function is as follows. Catalyzes the attachment of isoleucine to tRNA(Ile). As IleRS can inadvertently accommodate and process structurally similar amino acids such as valine, to avoid such errors it has two additional distinct tRNA(Ile)-dependent editing activities. One activity is designated as 'pretransfer' editing and involves the hydrolysis of activated Val-AMP. The other activity is designated 'posttransfer' editing and involves deacylation of mischarged Val-tRNA(Ile). This chain is Isoleucine--tRNA ligase 2, found in Burkholderia pseudomallei (strain K96243).